The sequence spans 399 residues: Odorant receptor 42b (399 aa).

The Cytoplasmic segment spans residues 1-45 (MVFELIRPAPLTEQKRSRDGCIYLYRAMKFIGWLPPKQGVLRYVY). The helical transmembrane segment at 46–66 (LTWTLMTFVWCTTYLPLGFLG) threads the bilayer. The Extracellular portion of the chain corresponds to 67–83 (SYMTQIKSFSPGEFLTS). The helical transmembrane segment at 84–104 (LQVCINAYGSSVKVAITYSML) threads the bilayer. Residues 105-140 (WRLIKAKNILDQLDLRCTAMEEREKIHLVVARSNHA) are Cytoplasmic-facing. A helical transmembrane segment spans residues 141-161 (FLIFTFVYCGYAGSTYLSSVL). Over 162-178 (SGRPPWQLYNPFIDWHD) the chain is Extracellular. A helical membrane pass occupies residues 179–199 (GTLKLWVASTLEYMVMSGAVL). Topologically, residues 200 to 268 (QDQLSDSYPL…AIIKPVIQGT (69 aa)) are cytoplasmic. Residues 269–289 (IFTQFLLIGLVLGFTLINVFF) form a helical membrane-spanning segment. The Extracellular segment spans residues 290–292 (FSD). Residues 293–313 (IWTGIASFMFVITILLQTFPF) form a helical membrane-spanning segment. Over 314–356 (CYTCNLIMEDCESLTHAIFQSNWVDASRRYKTTLLYFLQNVQQ) the chain is Cytoplasmic. A helical transmembrane segment spans residues 357 to 377 (PIVFIAGGIFQISMSSNISVA). Topologically, residues 378–399 (KFAFSVITITKQMNIADKFKTD) are extracellular.

The protein belongs to the insect chemoreceptor superfamily. Heteromeric odorant receptor channel (TC 1.A.69) family. Or2a subfamily. As to quaternary structure, interacts with Orco. Complexes exist early in the endomembrane system in olfactory sensory neurons (OSNs), coupling these complexes to the conserved ciliary trafficking pathway. In terms of tissue distribution, expressed in olfactory sensory neurons in the antenna.

The protein resides in the cell membrane. Its function is as follows. Odorant receptor which mediates acceptance or avoidance behavior, depending on its substrates. The odorant receptor repertoire encodes a large collection of odor stimuli that vary widely in identity, intensity, and duration. May form a complex with Orco to form odorant-sensing units, providing sensitive and prolonged odorant signaling and calcium permeability. Involved in the behavioral responses to ethyl acetate and pentyl acetate. The protein is Odorant receptor 42b (Or42b) of Drosophila melanogaster (Fruit fly).